A 349-amino-acid chain; its full sequence is Phosphoribosylformylglycinamidine cyclo-ligase (349 aa).

Belongs to the AIR synthase family.

The protein resides in the cytoplasm. It catalyses the reaction 2-formamido-N(1)-(5-O-phospho-beta-D-ribosyl)acetamidine + ATP = 5-amino-1-(5-phospho-beta-D-ribosyl)imidazole + ADP + phosphate + H(+). It functions in the pathway purine metabolism; IMP biosynthesis via de novo pathway; 5-amino-1-(5-phospho-D-ribosyl)imidazole from N(2)-formyl-N(1)-(5-phospho-D-ribosyl)glycinamide: step 2/2. The chain is Phosphoribosylformylglycinamidine cyclo-ligase from Methanococcus maripaludis (strain C7 / ATCC BAA-1331).